The primary structure comprises 44 residues: Alpha-amylase inhibitor magnificamide (44 aa).

3 disulfides stabilise this stretch: C6–C38, C16–C33, and C20–C39. The inhibitory motif stretch occupies residues 7 to 10; it reads YIYH.

It belongs to the sea anemone alpha-amylase inhibitor family.

It is found in the secreted. In terms of biological role, mammalian alpha-amylase (AMY2A) inhibitor. The recombinant peptide inhibits porcine pancreatic (Ki=0.17 nM) and human saliva alpha-amylases (Ki=7.7 nM). It does not show antimicrobial (tested on fungi and bacteria) or channel modulating activities (tested on 18 voltage-gated sodium and potassium channles). This is Alpha-amylase inhibitor magnificamide from Heteractis magnifica (Magnificent sea anemone).